The sequence spans 360 residues: Magnesium transporter NIPA2 (360 aa).

The Extracellular segment spans residues 1 to 9 (MSQGHGKYD). Residues 10 to 30 (FYIGLGLAMSSSIFIGGSFIL) traverse the membrane as a helical segment. The Cytoplasmic portion of the chain corresponds to 31–56 (KKKGLLRLARKGSTRAGQGGHAYLKE). Residues 57-77 (WLWWAGLLSMGAGEVANFAAY) traverse the membrane as a helical segment. Residue alanine 78 is a topological domain, extracellular. Residues 79 to 99 (FAPATLVTPLGALSVLVSAIL) traverse the membrane as a helical segment. The Cytoplasmic portion of the chain corresponds to 100–107 (SSYFLNER). Residues 108–128 (LNLHGKIGCLLSILGSTVMVI) traverse the membrane as a helical segment. The Extracellular portion of the chain corresponds to 129-149 (HAPKEEEIETLNEMSHKLGDP). A helical transmembrane segment spans residues 150 to 170 (GFVVFATLVVIVSLILIFVVG). Residues 171 to 175 (PRHGQ) are Cytoplasmic-facing. The helical transmembrane segment at 176–196 (TNILVYITICSVIGAVSVSCA) threads the bilayer. Over 197-215 (KGLGIAIKELFAGKPVLQH) the chain is Extracellular. The chain crosses the membrane as a helical span at residues 216–236 (PLTWILLLSLIVCVSTQINYL). Topologically, residues 237–246 (NRALDIFNTS) are cytoplasmic. A helical membrane pass occupies residues 247 to 267 (IVTPIYYVFFTTSVITCSAIL). Topologically, residues 268–278 (FKEWQDMPVDD) are extracellular. The helical transmembrane segment at 279-299 (VIGTLSGFFTIIVGIFLLHAF) threads the bilayer. Over 300–360 (KDVSFSLSSL…SRRNGNLTAF (61 aa)) the chain is Cytoplasmic.

The protein belongs to the NIPA family.

It is found in the cell membrane. The protein resides in the early endosome. It catalyses the reaction Mg(2+)(in) = Mg(2+)(out). Its function is as follows. Acts as a selective Mg(2+) transporter. The polypeptide is Magnesium transporter NIPA2 (NIPA2) (Bos taurus (Bovine)).